The chain runs to 173 residues: NAD(P)H-quinone oxidoreductase subunit J (173 aa).

This sequence belongs to the complex I 30 kDa subunit family. In terms of assembly, NDH-1 can be composed of about 15 different subunits; different subcomplexes with different compositions have been identified which probably have different functions.

It is found in the cellular thylakoid membrane. It catalyses the reaction a plastoquinone + NADH + (n+1) H(+)(in) = a plastoquinol + NAD(+) + n H(+)(out). The catalysed reaction is a plastoquinone + NADPH + (n+1) H(+)(in) = a plastoquinol + NADP(+) + n H(+)(out). In terms of biological role, NDH-1 shuttles electrons from an unknown electron donor, via FMN and iron-sulfur (Fe-S) centers, to quinones in the respiratory and/or the photosynthetic chain. The immediate electron acceptor for the enzyme in this species is believed to be plastoquinone. Couples the redox reaction to proton translocation, and thus conserves the redox energy in a proton gradient. Cyanobacterial NDH-1 also plays a role in inorganic carbon-concentration. The polypeptide is NAD(P)H-quinone oxidoreductase subunit J (Prochlorococcus marinus (strain NATL1A)).